The following is an 84-amino-acid chain: Mitochondrial import inner membrane translocase subunit tim9 (84 aa).

The Twin CX3C motif signature appears at 35 to 59 (CFSDCVQDFTSSKLSNKESECIAKC). 2 disulfides stabilise this stretch: Cys-35/Cys-59 and Cys-39/Cys-55.

This sequence belongs to the small Tim family. As to quaternary structure, heterohexamer; composed of 3 copies of TIM9 and 3 copies of TIM10, named soluble 70 kDa complex. Associates with the TIM22 complex, whose core is composed of TIM22 and TIM54. Interacts with the transmembrane regions of multi-pass transmembrane proteins in transit.

It is found in the mitochondrion inner membrane. In terms of biological role, mitochondrial intermembrane chaperone that participates in the import and insertion of multi-pass transmembrane proteins into the mitochondrial inner membrane. Also required for the transfer of beta-barrel precursors from the TOM complex to the sorting and assembly machinery (SAM complex) of the outer membrane. Acts as a chaperone-like protein that protects the hydrophobic precursors from aggregation and guide them through the mitochondrial intermembrane space. This chain is Mitochondrial import inner membrane translocase subunit tim9 (tim9), found in Schizosaccharomyces pombe (strain 972 / ATCC 24843) (Fission yeast).